We begin with the raw amino-acid sequence, 185 residues long: Threonylcarbamoyl-AMP synthase (185 aa).

Residues 4–185 (DWRVQQVARV…LRSGEVIRPA (182 aa)) form the YrdC-like domain.

This sequence belongs to the SUA5 family. TsaC subfamily.

The protein resides in the cytoplasm. The enzyme catalyses L-threonine + hydrogencarbonate + ATP = L-threonylcarbamoyladenylate + diphosphate + H2O. Functionally, required for the formation of a threonylcarbamoyl group on adenosine at position 37 (t(6)A37) in tRNAs that read codons beginning with adenine. Catalyzes the conversion of L-threonine, HCO(3)(-)/CO(2) and ATP to give threonylcarbamoyl-AMP (TC-AMP) as the acyladenylate intermediate, with the release of diphosphate. This Stutzerimonas stutzeri (strain A1501) (Pseudomonas stutzeri) protein is Threonylcarbamoyl-AMP synthase.